The chain runs to 419 residues: Probable pectate lyase C (419 aa).

The signal sequence occupies residues 1–19; the sequence is MRLGIALFSLIGLCHSVSA. Residues asparagine 48, asparagine 164, and asparagine 201 are each glycosylated (N-linked (GlcNAc...) asparagine). Arginine 204 is an active-site residue. One can recognise an EF-hand domain in the interval 261 to 296; it reads NEYFHGYVETNYYDPDRDGTLNGNELGVSASNYGGM. 5 residues coordinate Ca(2+): aspartate 274, aspartate 276, aspartate 278, threonine 280, and glutamate 285. Residues 350 to 395 are disordered; the sequence is ELISDEASMGGPGDLDGGSPPTDSDGDGIPDDAETEIGSDPNTADS. A compositionally biased stretch (acidic residues) spans 373-386; sequence SDGDGIPDDAETEI.

It belongs to the polysaccharide lyase 1 family. The cofactor is Ca(2+).

The protein resides in the secreted. It catalyses the reaction Eliminative cleavage of (1-&gt;4)-alpha-D-galacturonan to give oligosaccharides with 4-deoxy-alpha-D-galact-4-enuronosyl groups at their non-reducing ends.. In terms of biological role, pectinolytic enzyme consist of four classes of enzymes: pectin lyase, polygalacturonase, pectin methylesterase and rhamnogalacturonase. Among pectinolytic enzymes, pectin lyase is the most important in depolymerization of pectin, since it cleaves internal glycosidic bonds of highly methylated pectins. Favors pectate, the anion, over pectin, the methyl ester. The sequence is that of Probable pectate lyase C (plyC) from Aspergillus terreus (strain NIH 2624 / FGSC A1156).